Reading from the N-terminus, the 215-residue chain is Protein-L-isoaspartate O-methyltransferase (215 aa).

The active site involves Ser62.

Belongs to the methyltransferase superfamily. L-isoaspartyl/D-aspartyl protein methyltransferase family.

It is found in the cytoplasm. It catalyses the reaction [protein]-L-isoaspartate + S-adenosyl-L-methionine = [protein]-L-isoaspartate alpha-methyl ester + S-adenosyl-L-homocysteine. Catalyzes the methyl esterification of L-isoaspartyl residues in peptides and proteins that result from spontaneous decomposition of normal L-aspartyl and L-asparaginyl residues. It plays a role in the repair and/or degradation of damaged proteins. The protein is Protein-L-isoaspartate O-methyltransferase of Bradyrhizobium sp. (strain BTAi1 / ATCC BAA-1182).